We begin with the raw amino-acid sequence, 396 residues long: NADH-quinone oxidoreductase subunit D (396 aa).

This sequence belongs to the complex I 49 kDa subunit family. In terms of assembly, NDH-1 is composed of 14 different subunits. Subunits NuoB, C, D, E, F, and G constitute the peripheral sector of the complex.

It localises to the cell inner membrane. It carries out the reaction a quinone + NADH + 5 H(+)(in) = a quinol + NAD(+) + 4 H(+)(out). In terms of biological role, NDH-1 shuttles electrons from NADH, via FMN and iron-sulfur (Fe-S) centers, to quinones in the respiratory chain. The immediate electron acceptor for the enzyme in this species is believed to be ubiquinone. Couples the redox reaction to proton translocation (for every two electrons transferred, four hydrogen ions are translocated across the cytoplasmic membrane), and thus conserves the redox energy in a proton gradient. This Agrobacterium fabrum (strain C58 / ATCC 33970) (Agrobacterium tumefaciens (strain C58)) protein is NADH-quinone oxidoreductase subunit D.